A 182-amino-acid chain; its full sequence is ATP synthase subunit b 1 (182 aa).

A helical transmembrane segment spans residues 24 to 44 (FADPAFWVSIAFLMVVGFVYI).

Belongs to the ATPase B chain family. In terms of assembly, F-type ATPases have 2 components, F(1) - the catalytic core - and F(0) - the membrane proton channel. F(1) has five subunits: alpha(3), beta(3), gamma(1), delta(1), epsilon(1). F(0) has three main subunits: a(1), b(2) and c(10-14). The alpha and beta chains form an alternating ring which encloses part of the gamma chain. F(1) is attached to F(0) by a central stalk formed by the gamma and epsilon chains, while a peripheral stalk is formed by the delta and b chains.

It localises to the cell inner membrane. Functionally, f(1)F(0) ATP synthase produces ATP from ADP in the presence of a proton or sodium gradient. F-type ATPases consist of two structural domains, F(1) containing the extramembraneous catalytic core and F(0) containing the membrane proton channel, linked together by a central stalk and a peripheral stalk. During catalysis, ATP synthesis in the catalytic domain of F(1) is coupled via a rotary mechanism of the central stalk subunits to proton translocation. Its function is as follows. Component of the F(0) channel, it forms part of the peripheral stalk, linking F(1) to F(0). The protein is ATP synthase subunit b 1 of Rhodospirillum rubrum (strain ATCC 11170 / ATH 1.1.1 / DSM 467 / LMG 4362 / NCIMB 8255 / S1).